A 155-amino-acid polypeptide reads, in one-letter code: Ribosomal RNA large subunit methyltransferase H (155 aa).

Residues L72, G103, and 122–127 each bind S-adenosyl-L-methionine; that span reads LSPLTL.

Belongs to the RNA methyltransferase RlmH family. Homodimer.

The protein resides in the cytoplasm. The catalysed reaction is pseudouridine(1915) in 23S rRNA + S-adenosyl-L-methionine = N(3)-methylpseudouridine(1915) in 23S rRNA + S-adenosyl-L-homocysteine + H(+). In terms of biological role, specifically methylates the pseudouridine at position 1915 (m3Psi1915) in 23S rRNA. This is Ribosomal RNA large subunit methyltransferase H from Haemophilus influenzae (strain PittEE).